The sequence spans 279 residues: Four and a half LIM domains protein 2 (279 aa).

Residues 7-31 (CHHCNESLFGKKYILREESPYCVVC) form a C4-type zinc finger. 3 LIM zinc-binding domains span residues 40–92 (CEEC…CTDC), 101–153 (CQEC…CVPC), and 162–212 (CVQC…CLNC). A Glycyl lysine isopeptide (Lys-Gly) (interchain with G-Cter in SUMO2) cross-link involves residue lysine 78. Glycyl lysine isopeptide (Lys-Gly) (interchain with G-Cter in SUMO2) cross-links involve residues lysine 167 and lysine 220. The region spanning 221-275 (CAGCTNPISGLGGTKYISFEERQWHNDCFNCKKCSLSLVGRGFLTERDDILCPDC) is the LIM zinc-binding 4 domain. Serine 238 is subject to Phosphoserine.

Interacts with ZNF638 and TTN/titin. Interacts with E4F1. Interacts with GRB7. Interacts with SIRT1 and FOXO1. Interacts with CEFIP. Interacts with calcineurin. Interacts with FOXK1. In terms of tissue distribution, expressed in skeletal muscle and heart.

It is found in the cytoplasm. It localises to the nucleus. The protein resides in the myofibril. Its subcellular location is the sarcomere. The protein localises to the z line. Its function is as follows. May function as a molecular transmitter linking various signaling pathways to transcriptional regulation. Negatively regulates the transcriptional repressor E4F1 and may function in cell growth. Inhibits the transcriptional activity of FOXO1 and its apoptotic function by enhancing the interaction of FOXO1 with SIRT1 and FOXO1 deacetylation. Negatively regulates the calcineurin/NFAT signaling pathway in cardiomyocytes. The polypeptide is Four and a half LIM domains protein 2 (FHL2) (Homo sapiens (Human)).